An 88-amino-acid chain; its full sequence is Elongation factor 1-beta (88 aa).

The protein belongs to the EF-1-beta/EF-1-delta family.

Promotes the exchange of GDP for GTP in EF-1-alpha/GDP, thus allowing the regeneration of EF-1-alpha/GTP that could then be used to form the ternary complex EF-1-alpha/GTP/AAtRNA. This is Elongation factor 1-beta (ef1b) from Thermoplasma acidophilum (strain ATCC 25905 / DSM 1728 / JCM 9062 / NBRC 15155 / AMRC-C165).